Here is a 246-residue protein sequence, read N- to C-terminus: Ribosomal RNA small subunit methyltransferase J (246 aa).

S-adenosyl-L-methionine is bound by residues 115 to 116 and Asp169; that span reads ER.

This sequence belongs to the methyltransferase superfamily. RsmJ family.

The protein localises to the cytoplasm. The catalysed reaction is guanosine(1516) in 16S rRNA + S-adenosyl-L-methionine = N(2)-methylguanosine(1516) in 16S rRNA + S-adenosyl-L-homocysteine + H(+). Functionally, specifically methylates the guanosine in position 1516 of 16S rRNA. The sequence is that of Ribosomal RNA small subunit methyltransferase J from Buchnera aphidicola subsp. Acyrthosiphon pisum (strain APS) (Acyrthosiphon pisum symbiotic bacterium).